A 299-amino-acid polypeptide reads, in one-letter code: MPPKVAPESSDAVSSQEQPQRPPPATPPVPTPPPGRREEVGDRAEDPILQRLESLTALLRSERSAVRVTNASFETGRPALQPTADMRGDVTNMYNRPSTDSLWAVKPKPISNNMATSEDMVKIKVALEGLGVPTEHITGIIYQMCFYCASTSSSSYQDPKGVFEWPGGAIMVDDVMGKVQEIAGIRRVCRLYAPVTWNYMHIHDSPPSDWASMGFAPNVKYAAFDCFDYVENPAAVQPLGGVIPRPTRDEYVAYNAYKLIVLNKANNNDTYGNFSAQITGGRMGPTIEHNFNNANNKKQ.

A disordered region spans residues 1-46; that stretch reads MPPKVAPESSDAVSSQEQPQRPPPATPPVPTPPPGRREEVGDRAED. Over residues 20 to 34 the composition is skewed to pro residues; the sequence is QRPPPATPPVPTPPP. Residues 35–46 are compositionally biased toward basic and acidic residues; that stretch reads GRREEVGDRAED.

Belongs to the potexviruses coat protein family.

It localises to the virion. Functionally, required for genome encapsidation. Forms ribonucleoprotein complexes along with TGB1 helicase and viral RNA. This Helenium virus S (HelVS) protein is Capsid protein.